Consider the following 249-residue polypeptide: Fatty acid elongase 5 (249 aa).

A run of 3 helical transmembrane segments spans residues 23 to 43, 68 to 88, and 100 to 120; these read VFVN…VIVL, VALS…GVFN, and WIFV…FIVL. The HxxHH motif motif lies at 131–135; the sequence is HIYHH. The Nucleophile role is filled by histidine 134. 4 helical membrane-spanning segments follow: residues 138-158, 159-179, 193-213, and 217-236; these read IGFI…AFFG, AWIN…TSLG, MIQF…HSPI, and WAVL…MRFY.

The protein belongs to the ELO family.

The protein localises to the membrane. The catalysed reaction is an acyl-CoA + malonyl-CoA + H(+) = a 3-oxoacyl-CoA + CO2 + CoA. Its pathway is lipid metabolism; polyunsaturated fatty acid biosynthesis. Its function is as follows. Involved in the synthesis of fatty acids. Elongates C20 polyunsaturated fatty acids (PUFAs) with a preference for n-6 PUFAs. This is Fatty acid elongase 5 from Leishmania major.